The following is a 284-amino-acid chain: Quinate/shikimate dehydrogenase (NAD(+)) (284 aa).

Shikimate-binding residues include serine 18 and threonine 70. Residues 18–20 and threonine 70 each bind L-quinate; that span reads SRT. The Proton acceptor role is filled by tyrosine 73. Shikimate contacts are provided by lysine 74, asparagine 95, and aspartate 111. L-quinate contacts are provided by lysine 74, asparagine 95, and aspartate 111. Residues 137–138, aspartate 159, arginine 164, 203–206, alanine 214, valine 229, and glycine 252 contribute to the NAD(+) site; these read GG and TPMG. Glutamine 259 lines the shikimate pocket. Glutamine 259 provides a ligand contact to L-quinate.

It belongs to the shikimate dehydrogenase family. In terms of assembly, homodimer.

The enzyme catalyses L-quinate + NAD(+) = 3-dehydroquinate + NADH + H(+). It catalyses the reaction shikimate + NAD(+) = 3-dehydroshikimate + NADH + H(+). The protein operates within metabolic intermediate biosynthesis; chorismate biosynthesis; chorismate from D-erythrose 4-phosphate and phosphoenolpyruvate: step 4/7. Its pathway is aromatic compound metabolism; 3,4-dihydroxybenzoate biosynthesis; 3-dehydroquinate from D-quinate (NAD(+) route). Its function is as follows. Involved in the biosynthesis of the chorismate, which leads to the biosynthesis of aromatic amino acids, and plays a key role in the quinate degradation pathway. Catalyzes the NAD(+)-dependent oxidation of both quinate and shikimate to 3-dehydroquinate and 3-dehydroshikimate, respectively. It can only use NAD. The sequence is that of Quinate/shikimate dehydrogenase (NAD(+)) from Corynebacterium efficiens (strain DSM 44549 / YS-314 / AJ 12310 / JCM 11189 / NBRC 100395).